A 328-amino-acid chain; its full sequence is UDP-glucose 4-epimerase (328 aa).

A substrate-binding site is contributed by Thr119. The active-site Proton acceptor is the Tyr143.

It belongs to the NAD(P)-dependent epimerase/dehydratase family. NAD(+) serves as cofactor.

The catalysed reaction is UDP-alpha-D-glucose = UDP-alpha-D-galactose. Its pathway is carbohydrate metabolism; galactose metabolism. It functions in the pathway glycan metabolism; exopolysaccharide biosynthesis. The polypeptide is UDP-glucose 4-epimerase (exoB) (Rhizobium meliloti (strain 1021) (Ensifer meliloti)).